Consider the following 701-residue polypeptide: Polyribonucleotide nucleotidyltransferase (701 aa).

Mg(2+)-binding residues include Asp487 and Asp493. A KH domain is found at Pro554–Val613. Positions Gly623–Lys691 constitute an S1 motif domain.

It belongs to the polyribonucleotide nucleotidyltransferase family. As to quaternary structure, component of the RNA degradosome, which is a multiprotein complex involved in RNA processing and mRNA degradation. Mg(2+) serves as cofactor.

It localises to the cytoplasm. It catalyses the reaction RNA(n+1) + phosphate = RNA(n) + a ribonucleoside 5'-diphosphate. Its function is as follows. Involved in mRNA degradation. Catalyzes the phosphorolysis of single-stranded polyribonucleotides processively in the 3'- to 5'-direction. The protein is Polyribonucleotide nucleotidyltransferase of Pseudomonas paraeruginosa (strain DSM 24068 / PA7) (Pseudomonas aeruginosa (strain PA7)).